Consider the following 185-residue polypeptide: Ribosome-recycling factor (185 aa).

Residues 136–161 are disordered; sequence MDSLKTDEKKGEIGEDDRKRRETEVQ.

It belongs to the RRF family.

It is found in the cytoplasm. In terms of biological role, responsible for the release of ribosomes from messenger RNA at the termination of protein biosynthesis. May increase the efficiency of translation by recycling ribosomes from one round of translation to another. The protein is Ribosome-recycling factor of Rhizorhabdus wittichii (strain DSM 6014 / CCUG 31198 / JCM 15750 / NBRC 105917 / EY 4224 / RW1) (Sphingomonas wittichii).